The following is a 287-amino-acid chain: MDYKFEALVTALVLAVSFIFIYGKFSGAKQSQPAVKTTLNKDWQEFSLLTKTVLTHNTAIYRFGLPEADAVLGLPIGQHISISGVIDGKEMLRSYTPTSLDSDATGYFELLVKSYEKGNISKMLAELAIGDRIKVRGPKGFYHYEPNMYKEIGMIAGGTGISPMYQIIRAIFSNPRDKTRVCLVYGNQTKDDILLKPELDAMVAAKPDQFKILYMLDKVAEGEQWEGKLGYITEAIMREHLPAPSSSAQLLLCGPPPMVSSAKRIAVSLGFEKAKPISKKGDQVFAF.

The chain crosses the membrane as a helical span at residues 5 to 25; it reads FEALVTALVLAVSFIFIYGKF. One can recognise an FAD-binding FR-type domain in the interval 41-145; that stretch reads KDWQEFSLLT…RGPKGFYHYE (105 aa). FAD-binding positions include 125 to 142 and 151 to 183; these read AELAIGDRIKVRGPKGFY and EIGMIAGGTGISPMYQIIRAIFSNPRDKTRVCL.

This sequence belongs to the flavoprotein pyridine nucleotide cytochrome reductase family. As to quaternary structure, monomer. Component of the 2-(3-amino-3-carboxypropyl)histidine synthase complex composed of DPH1, DPH2, DPH3 and a NADH-dependent reductase, predominantly CBR1. The cofactor is FAD.

The protein resides in the mitochondrion outer membrane. It catalyses the reaction 2 Fe(III)-[cytochrome b5] + NADH = 2 Fe(II)-[cytochrome b5] + NAD(+) + H(+). The catalysed reaction is 2 Fe(3+)-[Dph3] + NADH = 2 Fe(2+)-[Dph3] + NAD(+) + H(+). It participates in protein modification; peptidyl-diphthamide biosynthesis. NADH-dependent reductase for DPH3 and cytochrome b5. Required for the first step of diphthamide biosynthesis, a post-translational modification of histidine which occurs in elongation factor 2. DPH1 and DPH2 transfer a 3-amino-3-carboxypropyl (ACP) group from S-adenosyl-L-methionine (SAM) to a histidine residue, the reaction is assisted by a reduction system comprising DPH3 and a NADH-dependent reductase, predominantly CBR1. By reducing DPH3, also involved in the formation of the tRNA wobble base modification mcm5s 2U (5-methoxycarbonylmethyl-2-thiouridine), mediated by the elongator complex. The cytochrome b5/NADH cytochrome b5 reductase electron transfer system supports the catalytic activity of several sterol biosynthetic enzymes. The protein is NADH-cytochrome b5 reductase 1 (CBR1) of Eremothecium gossypii (strain ATCC 10895 / CBS 109.51 / FGSC 9923 / NRRL Y-1056) (Yeast).